We begin with the raw amino-acid sequence, 288 residues long: Bifunctional protein FolD (288 aa).

166–168 lines the NADP(+) pocket; it reads GRS.

This sequence belongs to the tetrahydrofolate dehydrogenase/cyclohydrolase family. In terms of assembly, homodimer.

It catalyses the reaction (6R)-5,10-methylene-5,6,7,8-tetrahydrofolate + NADP(+) = (6R)-5,10-methenyltetrahydrofolate + NADPH. The enzyme catalyses (6R)-5,10-methenyltetrahydrofolate + H2O = (6R)-10-formyltetrahydrofolate + H(+). It functions in the pathway one-carbon metabolism; tetrahydrofolate interconversion. In terms of biological role, catalyzes the oxidation of 5,10-methylenetetrahydrofolate to 5,10-methenyltetrahydrofolate and then the hydrolysis of 5,10-methenyltetrahydrofolate to 10-formyltetrahydrofolate. This chain is Bifunctional protein FolD, found in Levilactobacillus brevis (strain ATCC 367 / BCRC 12310 / CIP 105137 / JCM 1170 / LMG 11437 / NCIMB 947 / NCTC 947) (Lactobacillus brevis).